Consider the following 367-residue polypeptide: MTSPKQSDLLILGLETSCDETAASVVRRAADGTVTVLSSVIGTQFEKHAPFGGVVPEIAARAHVESIDAIAAEAVRAAGVGFGDLDGVAATAGPGLVGGVMVGLAFGKAVALARGAPLVAVNHLEGHAVSARLGADIAYPFLLLLVSGGHCQLLEVSGVGACKRLGTTIDDAAGEAFDKIAKSLGLPYPGGPALEKLAVGGDPTRYALPRALLGRKDCDFSFSGLKTAAARIAETLTTDDARRDLAAGVQAAIARQLSERVDRAMKLYKDSHDPEDLRFVVAGGVAANGAVRAALLADCEKNGFSFAAPPLAYCTDNAAMIALAGAERLALGIFDDLDAIARPRWPLDEAAALANPANAYGRKGAKA.

Fe cation-binding residues include His-123 and His-127. Residues 145–149 (LVSGG), Asp-178, Gly-191, and Asn-288 each bind substrate. A Fe cation-binding site is contributed by Asp-316.

This sequence belongs to the KAE1 / TsaD family. Requires Fe(2+) as cofactor.

The protein localises to the cytoplasm. It carries out the reaction L-threonylcarbamoyladenylate + adenosine(37) in tRNA = N(6)-L-threonylcarbamoyladenosine(37) in tRNA + AMP + H(+). Its function is as follows. Required for the formation of a threonylcarbamoyl group on adenosine at position 37 (t(6)A37) in tRNAs that read codons beginning with adenine. Is involved in the transfer of the threonylcarbamoyl moiety of threonylcarbamoyl-AMP (TC-AMP) to the N6 group of A37, together with TsaE and TsaB. TsaD likely plays a direct catalytic role in this reaction. In Caulobacter vibrioides (strain ATCC 19089 / CIP 103742 / CB 15) (Caulobacter crescentus), this protein is tRNA N6-adenosine threonylcarbamoyltransferase.